Consider the following 317-residue polypeptide: Glucokinase (317 aa).

It belongs to the ROK (NagC/XylR) family. As to quaternary structure, homodimer. It depends on a divalent metal cation as a cofactor.

It carries out the reaction D-glucose + ATP = D-glucose 6-phosphate + ADP + H(+). Its function is as follows. Catalyzes the phosphorylation of D-glucose to D-glucose 6-phosphate using ATP as the phosphate donor. Can also phosphorylate 2-deoxyglucose, with lower efficiency. ITP can also serve as a phosphoryl donor. In Thermotoga maritima (strain ATCC 43589 / DSM 3109 / JCM 10099 / NBRC 100826 / MSB8), this protein is Glucokinase.